The chain runs to 204 residues: Guanylate kinase (204 aa).

Residues 18–196 enclose the Guanylate kinase-like domain; it reads PKLFTISAPA…SYEVLKSIFI (179 aa). Position 25 to 32 (25 to 32) interacts with ATP; the sequence is APAGAGKT.

Belongs to the guanylate kinase family.

The protein localises to the cytoplasm. The catalysed reaction is GMP + ATP = GDP + ADP. In terms of biological role, essential for recycling GMP and indirectly, cGMP. This chain is Guanylate kinase, found in Chlamydia abortus (strain DSM 27085 / S26/3) (Chlamydophila abortus).